Here is a 121-residue protein sequence, read N- to C-terminus: NAD(P)H-quinone oxidoreductase subunit M (121 aa).

Belongs to the complex I NdhM subunit family. In terms of assembly, NDH-1 can be composed of about 15 different subunits; different subcomplexes with different compositions have been identified which probably have different functions.

The protein localises to the cellular thylakoid membrane. The enzyme catalyses a plastoquinone + NADH + (n+1) H(+)(in) = a plastoquinol + NAD(+) + n H(+)(out). It catalyses the reaction a plastoquinone + NADPH + (n+1) H(+)(in) = a plastoquinol + NADP(+) + n H(+)(out). Functionally, NDH-1 shuttles electrons from an unknown electron donor, via FMN and iron-sulfur (Fe-S) centers, to quinones in the respiratory and/or the photosynthetic chain. The immediate electron acceptor for the enzyme in this species is believed to be plastoquinone. Couples the redox reaction to proton translocation, and thus conserves the redox energy in a proton gradient. Cyanobacterial NDH-1 also plays a role in inorganic carbon-concentration. The sequence is that of NAD(P)H-quinone oxidoreductase subunit M from Nostoc punctiforme (strain ATCC 29133 / PCC 73102).